Consider the following 257-residue polypeptide: MLLVVDVGNTNTVFGIFENGKNVPLFHKRTVTRKDRTSDELGLFFRGFLREFKIENEAITGGIYSSVVPTLNPILERMFQDWFKIEAIRVHYQMKLPFSISYPRPYEIGADRLVNAAACVIDSPGKFIIIDLGTATTFCVVSEKPEYLGGVIAPGLKVSMDALTRNTSQLPPIVFQSPEKILGDSTIESIQAGFFFGWIGLLEGIIREIKKDKGQDYRVIGTGGLVTVIDAAHPGIFDKIDPLLTLRGLQILHQMNS.

Residue 6–13 (DVGNTNTV) participates in ATP binding. Substrate contacts are provided by residues Tyr-102 and 109-112 (GADR). The Proton acceptor role is filled by Asp-111. Position 131 (Asp-131) interacts with K(+). Residue Thr-134 participates in ATP binding. A substrate-binding site is contributed by Thr-186.

This sequence belongs to the type III pantothenate kinase family. Homodimer. Requires NH4(+) as cofactor. K(+) serves as cofactor.

Its subcellular location is the cytoplasm. The catalysed reaction is (R)-pantothenate + ATP = (R)-4'-phosphopantothenate + ADP + H(+). It functions in the pathway cofactor biosynthesis; coenzyme A biosynthesis; CoA from (R)-pantothenate: step 1/5. In terms of biological role, catalyzes the phosphorylation of pantothenate (Pan), the first step in CoA biosynthesis. The chain is Type III pantothenate kinase from Leptospira borgpetersenii serovar Hardjo-bovis (strain JB197).